Reading from the N-terminus, the 355-residue chain is Protein ECERIFERUM 16 (355 aa).

2 disordered regions span residues 1–60 and 296–315; these read MDSK…LPSN and HSST…KIHM. Residues 7-28 show a composition bias toward basic residues; that stretch reads AKSKRAHTLHHSKKSHSVHKPK. 2 stretches are compositionally biased toward polar residues: residues 41–53 and 296–310; these read QGNQ…QSRR and HSST…NPSD.

Interacts with RST1. As to expression, expressed in taproots, lateral roots, root tips, leaf veins, cauline leaves, inflorescences, flowers, and siliques.

It is found in the cytoplasm. The protein resides in the cytosol. It localises to the endoplasmic reticulum. Together with RST1, acts as a cofactor of the cytoplasmic exosome and connects the cytosolic RNA exosome to the SKI complex. Acts as a post-transcriptional gene silencing (PTGS) suppressor. CER16/RIPR can, like RST1 suppress the production of small interfering RNAs (siRNAs) from the CER3 locus, which is involved in cuticule membrane and wax production, and in the typhine and sporopollenin biosynthesis of pollen. The chain is Protein ECERIFERUM 16 from Arabidopsis thaliana (Mouse-ear cress).